Here is a 59-residue protein sequence, read N- to C-terminus: uncharacterized protein (59 aa).

This is an uncharacterized protein from Sulfolobus islandicus rod-shaped virus 1 (SIRV-1).